Here is a 275-residue protein sequence, read N- to C-terminus: 2-dehydro-3-deoxyphosphooctonate aldolase (275 aa).

Belongs to the KdsA family.

It is found in the cytoplasm. The enzyme catalyses D-arabinose 5-phosphate + phosphoenolpyruvate + H2O = 3-deoxy-alpha-D-manno-2-octulosonate-8-phosphate + phosphate. It participates in carbohydrate biosynthesis; 3-deoxy-D-manno-octulosonate biosynthesis; 3-deoxy-D-manno-octulosonate from D-ribulose 5-phosphate: step 2/3. Its pathway is bacterial outer membrane biogenesis; lipopolysaccharide biosynthesis. The protein is 2-dehydro-3-deoxyphosphooctonate aldolase of Protochlamydia amoebophila (strain UWE25).